Consider the following 424-residue polypeptide: Imidazolonepropionase (424 aa).

Fe(3+) is bound by residues histidine 84 and histidine 86. Zn(2+)-binding residues include histidine 84 and histidine 86. The 4-imidazolone-5-propanoate site is built by arginine 93, tyrosine 156, and histidine 189. Tyrosine 156 serves as a coordination point for N-formimidoyl-L-glutamate. Position 254 (histidine 254) interacts with Fe(3+). Histidine 254 serves as a coordination point for Zn(2+). A 4-imidazolone-5-propanoate-binding site is contributed by glutamate 257. Residue aspartate 328 participates in Fe(3+) binding. Aspartate 328 provides a ligand contact to Zn(2+). N-formimidoyl-L-glutamate-binding residues include asparagine 330 and glycine 332. Serine 333 contributes to the 4-imidazolone-5-propanoate binding site.

Belongs to the metallo-dependent hydrolases superfamily. HutI family. The cofactor is Zn(2+). Fe(3+) is required as a cofactor.

The protein localises to the cytoplasm. It carries out the reaction 4-imidazolone-5-propanoate + H2O = N-formimidoyl-L-glutamate. It participates in amino-acid degradation; L-histidine degradation into L-glutamate; N-formimidoyl-L-glutamate from L-histidine: step 3/3. Catalyzes the hydrolytic cleavage of the carbon-nitrogen bond in imidazolone-5-propanoate to yield N-formimidoyl-L-glutamate. It is the third step in the universal histidine degradation pathway. This Geobacillus kaustophilus (strain HTA426) protein is Imidazolonepropionase.